The primary structure comprises 147 residues: DNA-directed RNA polymerase subunit 6 homolog (147 aa).

The protein belongs to the archaeal RpoK/eukaryotic RPB6 RNA polymerase subunit family. Part of the viral DNA-directed RNA polymerase that consists of 8 polII-like subunits (RPB1, RPB2, RPB3, RPB5, RPB6, RPB7, RPB9, RPB10), a capping enzyme and a termination factor.

It is found in the host cytoplasm. The protein localises to the virion. Its function is as follows. Component of the DNA-directed RNA polymerase (RNAP) that catalyzes the transcription in the cytoplasm of viral DNA into RNA using the four ribonucleoside triphosphates as substrates. This chain is DNA-directed RNA polymerase subunit 6 homolog, found in Ornithodoros (relapsing fever ticks).